A 347-amino-acid chain; its full sequence is NADH-quinone oxidoreductase subunit H (347 aa).

A run of 8 helical transmembrane segments spans residues I25 to M45, F95 to I115, I128 to G148, I168 to F188, G200 to V220, F251 to F271, F284 to L304, and V324 to S344.

Belongs to the complex I subunit 1 family. NDH-1 is composed of 14 different subunits. Subunits NuoA, H, J, K, L, M, N constitute the membrane sector of the complex.

The protein localises to the cell inner membrane. It catalyses the reaction a quinone + NADH + 5 H(+)(in) = a quinol + NAD(+) + 4 H(+)(out). Functionally, NDH-1 shuttles electrons from NADH, via FMN and iron-sulfur (Fe-S) centers, to quinones in the respiratory chain. The immediate electron acceptor for the enzyme in this species is believed to be ubiquinone. Couples the redox reaction to proton translocation (for every two electrons transferred, four hydrogen ions are translocated across the cytoplasmic membrane), and thus conserves the redox energy in a proton gradient. This subunit may bind ubiquinone. The polypeptide is NADH-quinone oxidoreductase subunit H (Psychrobacter arcticus (strain DSM 17307 / VKM B-2377 / 273-4)).